The chain runs to 634 residues: Threonine--tRNA ligase (634 aa).

Residues 1-61 form the TGS domain; it reads MINIRFPDGS…NSNCELRLIT (61 aa). The catalytic stretch occupies residues 241 to 532; sequence DHRKIGKVLD…LIEHYAGNLP (292 aa). The Zn(2+) site is built by cysteine 332, histidine 383, and histidine 509.

Belongs to the class-II aminoacyl-tRNA synthetase family. In terms of assembly, homodimer. It depends on Zn(2+) as a cofactor.

The protein localises to the cytoplasm. It carries out the reaction tRNA(Thr) + L-threonine + ATP = L-threonyl-tRNA(Thr) + AMP + diphosphate + H(+). Its function is as follows. Catalyzes the attachment of threonine to tRNA(Thr) in a two-step reaction: L-threonine is first activated by ATP to form Thr-AMP and then transferred to the acceptor end of tRNA(Thr). Also edits incorrectly charged L-seryl-tRNA(Thr). This chain is Threonine--tRNA ligase, found in Francisella tularensis subsp. holarctica (strain OSU18).